The chain runs to 86 residues: UPF0297 protein SAHV_1604 (86 aa).

The protein belongs to the UPF0297 family.

This is UPF0297 protein SAHV_1604 from Staphylococcus aureus (strain Mu3 / ATCC 700698).